The primary structure comprises 302 residues: uncharacterized protein (302 aa).

Belongs to the HAD-like hydrolase superfamily.

This is an uncharacterized protein from Saccharomyces cerevisiae (strain ATCC 204508 / S288c) (Baker's yeast).